A 273-amino-acid chain; its full sequence is MSGLYTETREVLRKYGVRLRRSLGQNYLIDEVKRQRILEYADLREDDRVLEIGPGIGTLTLPMAELAGHVTAIESDPLIAAILMDRLQVDNVDVIVGDALRVDFPEFNKVVSNLPYQISSPITFRLLEHDFELAVLMYQKEFARRMVAEPGTREYSRLSVMVHFLAEVEIVDYLKPGCFFPRPRVESAVVTLKPTGFRAPAFLEDVCRALFQHRKKKTSKSLRESFHEIRTDLSFNEVLRGLPPEILEKRVFQLRPEDILEIAEHIEDLSGSS.

Residues Asn26, Leu28, Gly53, Glu74, Asp98, and Asn113 each coordinate S-adenosyl-L-methionine.

It belongs to the class I-like SAM-binding methyltransferase superfamily. rRNA adenine N(6)-methyltransferase family. RsmA subfamily.

Its subcellular location is the cytoplasm. Specifically dimethylates two adjacent adenosines in the loop of a conserved hairpin near the 3'-end of 16S rRNA in the 30S particle. May play a critical role in biogenesis of 30S subunits. The protein is Probable ribosomal RNA small subunit methyltransferase A of Methanothermobacter thermautotrophicus (strain ATCC 29096 / DSM 1053 / JCM 10044 / NBRC 100330 / Delta H) (Methanobacterium thermoautotrophicum).